Reading from the N-terminus, the 87-residue chain is Small ribosomal subunit protein bS20 (87 aa).

Basic residues predominate over residues 1–11 (MAHHKSAIKRI). A disordered region spans residues 1-26 (MAHHKSAIKRIKQNEKRNARNRHQKS).

It belongs to the bacterial ribosomal protein bS20 family.

Its function is as follows. Binds directly to 16S ribosomal RNA. The protein is Small ribosomal subunit protein bS20 of Trichlorobacter lovleyi (strain ATCC BAA-1151 / DSM 17278 / SZ) (Geobacter lovleyi).